The primary structure comprises 74 residues: Protein krueppel (74 aa).

C2H2-type zinc fingers lie at residues 1-4 (ERTH), 10-32 (FECSQCHKRFTRDHHLKTHMRLH), 38-60 (YHCTHCDRHFVQVANLRRHLRVH), and 66-74 (YACELCASR).

Belongs to the krueppel C2H2-type zinc-finger protein family.

The protein localises to the nucleus. Its function is as follows. Krueppel is a gap class segmentation protein. The polypeptide is Protein krueppel (Kr) (Euscelis plebejus (Leafhopper)).